The sequence spans 54 residues: Small, acid-soluble spore protein gamma-type (54 aa).

The interval 1–54 (MAKKNRNKQQQEMQQQQQQHQAEFANEFAEGSSAEQARQQQQKAAGKRQKKNQQ) is disordered. Composition is skewed to low complexity over residues 10–21 (QQEMQQQQQQHQ) and 29–44 (AEGSSAEQARQQQQKA). The span at 45-54 (AGKRQKKNQQ) shows a compositional bias: basic residues.

This sequence belongs to the gamma-type SASP family.

SASP are proteins degraded in the first minutes of spore germination and provide amino acids for both new protein synthesis and metabolism. These proteins may be involved in dormant spore's high resistance to UV light. The chain is Small, acid-soluble spore protein gamma-type (sspA) from Alkalihalophilus pseudofirmus (strain ATCC BAA-2126 / JCM 17055 / OF4) (Bacillus pseudofirmus).